We begin with the raw amino-acid sequence, 355 residues long: uncharacterized protein (355 aa).

Position 58–65 (58–65 (GYIIFGIK)) interacts with ATP.

This is an uncharacterized protein from Ureaplasma parvum serovar 3 (strain ATCC 700970).